The following is a 204-amino-acid chain: GTP cyclohydrolase 1 (204 aa).

Zn(2+) is bound by residues C93, H96, and C164.

This sequence belongs to the GTP cyclohydrolase I family. Toroid-shaped homodecamer, composed of two pentamers of five dimers.

It catalyses the reaction GTP + H2O = 7,8-dihydroneopterin 3'-triphosphate + formate + H(+). It participates in cofactor biosynthesis; 7,8-dihydroneopterin triphosphate biosynthesis; 7,8-dihydroneopterin triphosphate from GTP: step 1/1. This chain is GTP cyclohydrolase 1, found in Rhizobium meliloti (strain 1021) (Ensifer meliloti).